The following is a 419-amino-acid chain: uncharacterized protein (419 aa).

Positions 29–236 (PKFQDKIRIR…KLIELELKTI (208 aa)) constitute an Obg domain. The OBG-type G domain maps to 237–414 (CEIGLVGLPN…LVRGMTQLLQ (178 aa)). GTP is bound by residues 243 to 250 (GLPNAGKS), 295 to 299 (DIPGI), and 364 to 367 (ANKA).

Belongs to the TRAFAC class OBG-HflX-like GTPase superfamily. OBG GTPase family.

It localises to the mitochondrion. This is an uncharacterized protein from Schizosaccharomyces pombe (strain 972 / ATCC 24843) (Fission yeast).